The chain runs to 400 residues: Na(+)/H(+) antiporter NhaA (400 aa).

12 helical membrane-spanning segments follow: residues 18–38 (LATE…AIII), 68–88 (VHMW…GLEI), 105–125 (LPAL…LAVS), 133–153 (GGWA…LALL), 163–183 (VMLV…IAVF), 186–206 (SSIN…LLAF), 211–231 (VVAL…TLLS), 232–252 (GVHA…SAGS), 267–287 (GLAP…NAGV), 305–325 (IALG…LLAV), 338–358 (WLQI…SLFI), and 372–392 (AAKI…CVIL).

This sequence belongs to the NhaA Na(+)/H(+) (TC 2.A.33) antiporter family.

The protein localises to the cell inner membrane. It carries out the reaction Na(+)(in) + 2 H(+)(out) = Na(+)(out) + 2 H(+)(in). In terms of biological role, na(+)/H(+) antiporter that extrudes sodium in exchange for external protons. The sequence is that of Na(+)/H(+) antiporter NhaA from Pseudomonas entomophila (strain L48).